The primary structure comprises 1471 residues: ABC multidrug transporter F (1471 aa).

Polar residues predominate over residues 1–19 (MALNSTDNRWSTGEDTPSE). The segment at 1–40 (MALNSTDNRWSTGEDTPSEAQLPDGEERLDAAPDEKVTAE) is disordered. An N-linked (GlcNAc...) asparagine glycan is attached at asparagine 4. Residues 25-40 (GEERLDAAPDEKVTAE) show a composition bias toward basic and acidic residues. Asparagine 71 and asparagine 311 each carry an N-linked (GlcNAc...) asparagine glycan. The ABC transporter 1 domain maps to 133-387 (LKVPTMVRQA…FEQLGFQCPE (255 aa)). A helical membrane pass occupies residues 498–518 (VTLAMLIGNFFEALIIASIFY). Asparagine 519 carries N-linked (GlcNAc...) asparagine glycosylation. Transmembrane regions (helical) follow at residues 532 to 552 (ALLF…ILTL), 578 to 598 (FIMS…TLYF), 607 to 627 (GPFF…SMFF), 641 to 661 (LAPS…TIPV), and 751 to 771 (IIIA…ELVA). The interval 791 to 819 (RAKQGQRDEEQPSASAVPSEKYSEAPTPV) is disordered. The 243-residue stretch at 829-1071 (FHWEDVCYDV…TLMDYFVRNG (243 aa)) folds into the ABC transporter 2 domain. Asparagine 842 carries N-linked (GlcNAc...) asparagine glycosylation. 865–872 (GVSGAGKT) serves as a coordination point for ATP. Helical transmembrane passes span 1167–1187 (YLYS…FSFF), 1201–1221 (FGVF…IPTF), 1252–1272 (FAWN…PVGL), 1288–1308 (LVFL…HLLI), and 1326–1346 (IMMY…GFWI). Asparagine 1386, asparagine 1422, and asparagine 1429 each carry an N-linked (GlcNAc...) asparagine glycan. The chain crosses the membrane as a helical span at residues 1441–1461 (FGLLWVYVAVNTFGAVFLYWL).

It belongs to the ABC transporter superfamily. ABCG family. PDR (TC 3.A.1.205) subfamily.

The protein resides in the cell membrane. It catalyses the reaction fluconazole(in) + ATP + H2O = fluconazole(out) + ADP + phosphate + H(+). The catalysed reaction is itraconazole(in) + ATP + H2O = itraconazole(out) + ADP + phosphate + H(+). The efflux inhibitor FK506 impairs the transport activity. Functionally, pleiotropic ABC efflux transporter that shows a strong substrate specificity for the azole class of drugs such as lotrimazole (CLT), fluconazole (FLC), itraconazole (ITC), ketoconazole (KTC), posaconazole (POS), econazole (ECON), metconazole (MET), miconazole (MCZ), prochloraz (PCLZ), and tebuconazole (TEBZ). This Aspergillus fumigatus (strain ATCC MYA-4609 / CBS 101355 / FGSC A1100 / Af293) (Neosartorya fumigata) protein is ABC multidrug transporter F.